The chain runs to 274 residues: 2,3,4,5-tetrahydropyridine-2,6-dicarboxylate N-succinyltransferase (274 aa).

Residues Arg104 and Asp141 each coordinate substrate.

The protein belongs to the transferase hexapeptide repeat family. Homotrimer.

The protein resides in the cytoplasm. The catalysed reaction is (S)-2,3,4,5-tetrahydrodipicolinate + succinyl-CoA + H2O = (S)-2-succinylamino-6-oxoheptanedioate + CoA. It functions in the pathway amino-acid biosynthesis; L-lysine biosynthesis via DAP pathway; LL-2,6-diaminopimelate from (S)-tetrahydrodipicolinate (succinylase route): step 1/3. The sequence is that of 2,3,4,5-tetrahydropyridine-2,6-dicarboxylate N-succinyltransferase from Shigella boydii serotype 4 (strain Sb227).